We begin with the raw amino-acid sequence, 325 residues long: Forkhead box protein B1 (325 aa).

Residues Gln-12–Leu-103 constitute a DNA-binding region (fork-head). Over residues Leu-284–Ser-309 the composition is skewed to low complexity. Residues Leu-284 to His-325 are disordered.

Its subcellular location is the nucleus. Its function is as follows. Transcription factor expressed by neural progenitor cells in specific regions of the embryonic neuroepithelium. Essential for the mammillary nuclei maintenance. Negatively regulates the proliferation of oligodendrocyte progenitors and promotes oligodendrocyte maturation. Also expressed in mammary glands, plays a role in lactation, controls development of mammary glands and the inferior colliculi of the midbrain in the central nervous system that regulates the milk-ejection reflex. The polypeptide is Forkhead box protein B1 (FOXB1) (Homo sapiens (Human)).